The following is a 1352-amino-acid chain: Stress response protein NST1 (1352 aa).

A compositionally biased stretch (polar residues) spans 1-12 (MSSKSQQPPTGL). Disordered regions lie at residues 1–66 (MSSK…FFNF), 216–422 (NANA…TQSS), 503–522 (NGLR…VEVD), 531–616 (DHRA…FLSF), 651–693 (RRSV…AEEG), 726–880 (LREL…IAKE), 978–1118 (GLKS…DDAF), 1139–1275 (GSLI…GAGV), and 1307–1336 (GGTA…HQQQ). A compositionally biased stretch (basic residues) spans 16-25 (AAKKRAKKAA). The span at 26-45 (KQSQNPQPQSAPQTSSQTPA) shows a compositional bias: low complexity. Positions 46–59 (SVPPLPPASVPDPL) are enriched in pro residues. Polar residues predominate over residues 218-229 (NARSFPSPQQTI). Residues 242 to 254 (REEEYDDEEEIEE) show a composition bias toward acidic residues. A compositionally biased stretch (basic residues) spans 268–277 (KKNKKKKKKG). A compositionally biased stretch (pro residues) spans 287–300 (VEPPAPLPPLPPPS). Residues 317–330 (LPTHQPQPLSQQPP) are compositionally biased toward low complexity. Residues 331–349 (SLNPLPPPAPASAPTPTPP) show a composition bias toward pro residues. Positions 368–388 (PARSARAAGKAPASAAPPHNA) are enriched in low complexity. Positions 531-541 (DHRAPELHDHD) are enriched in basic and acidic residues. The segment covering 542–583 (PDDLDGEESEEYDDDDDYADDDELDDDDIGTDEADVGDEIDE) has biased composition (acidic residues). The span at 653–664 (SVREEQNLRDMQ) shows a compositional bias: basic and acidic residues. The span at 665–680 (EETDEEEEEEDDDESR) shows a compositional bias: acidic residues. Composition is skewed to basic and acidic residues over residues 681–693 (DEPM…AEEG), 726–749 (LREL…EAQK), and 759–880 (QKAE…IAKE). A coiled-coil region spans residues 712–943 (AYRERVAKQR…AAQQAQRERA (232 aa)). Residues 1008 to 1020 (TNATPGRSMQKTP) are compositionally biased toward polar residues. A compositionally biased stretch (pro residues) spans 1153-1164 (PTPPAPIAPPNL). Composition is skewed to polar residues over residues 1173–1186 (SDGQ…LRST) and 1208–1219 (QPQQRRPTTSWD).

Belongs to the NST1 family.

The protein resides in the cytoplasm. Its function is as follows. May act as a negative regulator of salt tolerance. This chain is Stress response protein NST1 (NST1), found in Cryptococcus neoformans var. neoformans serotype D (strain JEC21 / ATCC MYA-565) (Filobasidiella neoformans).